A 500-amino-acid chain; its full sequence is L-arabinose isomerase (500 aa).

4 residues coordinate Mn(2+): Glu-306, Glu-333, His-349, and His-448.

Belongs to the arabinose isomerase family. Mn(2+) is required as a cofactor.

It catalyses the reaction beta-L-arabinopyranose = L-ribulose. It participates in carbohydrate degradation; L-arabinose degradation via L-ribulose; D-xylulose 5-phosphate from L-arabinose (bacterial route): step 1/3. In terms of biological role, catalyzes the conversion of L-arabinose to L-ribulose. This is L-arabinose isomerase from Koribacter versatilis (strain Ellin345).